A 437-amino-acid chain; its full sequence is Argininosuccinate lyase (437 aa).

It belongs to the lyase 1 family. Argininosuccinate lyase subfamily.

Its subcellular location is the cytoplasm. It catalyses the reaction 2-(N(omega)-L-arginino)succinate = fumarate + L-arginine. Its pathway is amino-acid biosynthesis; L-arginine biosynthesis; L-arginine from L-ornithine and carbamoyl phosphate: step 3/3. This Clostridium novyi (strain NT) protein is Argininosuccinate lyase.